The chain runs to 123 residues: ATP synthase epsilon chain (123 aa).

The disordered stretch occupies residues 96 to 123 (ESRKQSAETEHDKAVAESELRAVKRMEA).

It belongs to the ATPase epsilon chain family. F-type ATPases have 2 components, CF(1) - the catalytic core - and CF(0) - the membrane proton channel. CF(1) has five subunits: alpha(3), beta(3), gamma(1), delta(1), epsilon(1). CF(0) has three main subunits: a, b and c.

Its subcellular location is the cell membrane. Functionally, produces ATP from ADP in the presence of a proton gradient across the membrane. This chain is ATP synthase epsilon chain, found in Corynebacterium jeikeium (strain K411).